We begin with the raw amino-acid sequence, 245 residues long: tRNA pseudouridine synthase A (245 aa).

The Nucleophile role is filled by Asp52. Residue Tyr111 coordinates substrate.

It belongs to the tRNA pseudouridine synthase TruA family. In terms of assembly, homodimer.

It catalyses the reaction uridine(38/39/40) in tRNA = pseudouridine(38/39/40) in tRNA. Its function is as follows. Formation of pseudouridine at positions 38, 39 and 40 in the anticodon stem and loop of transfer RNAs. In Nitrobacter hamburgensis (strain DSM 10229 / NCIMB 13809 / X14), this protein is tRNA pseudouridine synthase A.